We begin with the raw amino-acid sequence, 554 residues long: Glutamine--tRNA ligase (554 aa).

The short motif at 34 to 44 (PEPNGYLHIGH) is the 'HIGH' region element. ATP is bound by residues 35-37 (EPN) and 41-47 (HIGHAKS). Residues D67 and Y212 each contribute to the L-glutamine site. Residues T231, 261-262 (RL), and 269-271 (MSK) each bind ATP. The 'KMSKS' region signature appears at 268–272 (VMSKR). Residues 317–324 (TKQDNTIE) form an interaction with tRNA region.

It belongs to the class-I aminoacyl-tRNA synthetase family. As to quaternary structure, monomer.

It localises to the cytoplasm. It catalyses the reaction tRNA(Gln) + L-glutamine + ATP = L-glutaminyl-tRNA(Gln) + AMP + diphosphate. This is Glutamine--tRNA ligase from Escherichia coli O127:H6 (strain E2348/69 / EPEC).